A 573-amino-acid chain; its full sequence is Proton-coupled zinc antiporter SLC30A9, mitochondrial (573 aa).

A disordered region spans residues 66–108; it reads NCSTSGSGKDGSPTRPEEPKTTEKAQAAQPAAKGAGSKPQGLT. The segment covering 90–104 has biased composition (low complexity); that stretch reads AQAAQPAAKGAGSKP. A run of 5 helical transmembrane segments spans residues 244-264, 319-339, 347-367, 397-417, and 429-449; these read VVMVAICINGLNFFFKLLAWV, GVGIFMMGAGLSWYHGIMGLL, LLWAYCILAGSLVSEGATLLV, VVLLEDAAAVLGVVLAAGCMG, and SLGSLGVGTLLGTVSAFLIYT. The LXXLL motif motif lies at 467–471; it reads LTEFL.

It belongs to the cation diffusion facilitator (CDF) transporter (TC 2.A.4) family. SLC30A subfamily.

It is found in the mitochondrion membrane. Its subcellular location is the nucleus. The protein localises to the endoplasmic reticulum. It catalyses the reaction Zn(2+)(in) + 2 H(+)(out) = Zn(2+)(out) + 2 H(+)(in). In terms of biological role, mitochondrial proton-coupled zinc ion antiporter mediating the export of zinc from the mitochondria and involved in zinc homeostasis, zinc mobilization as well as mitochondrial morphology and health. In nucleus, may function as a secondary coactivator for nuclear receptors. In Danio rerio (Zebrafish), this protein is Proton-coupled zinc antiporter SLC30A9, mitochondrial (slc30a9).